A 666-amino-acid polypeptide reads, in one-letter code: Putative cysteine-rich receptor-like protein kinase 31 (666 aa).

An N-terminal signal peptide occupies residues 1–23; the sequence is MCLNTLCAILCFVLTVSFGFVSA. Gnk2-homologous domains are found at residues 24-130 and 136-245; these read QKCG…NNSF and LEPT…GYKY. The Extracellular portion of the chain corresponds to 24–280; sequence QKCGESVFFR…PDGKKISTGV (257 aa). N-linked (GlcNAc...) asparagine glycans are attached at residues asparagine 52, asparagine 62, asparagine 104, asparagine 127, and asparagine 151. A helical membrane pass occupies residues 281-301; the sequence is IVAIVVSAVIFVVLVALGLVI. At 302–666 the chain is on the cytoplasmic side; it reads WKRRQSYKTL…SASITRATPR (365 aa). The Protein kinase domain maps to 339 to 616; it reads FSRNNKLGQG…IFQMLTNSSI (278 aa). ATP-binding positions include 345 to 353 and lysine 367; that span reads LGQGGFGEV. Residue tyrosine 412 is modified to Phosphotyrosine. Catalysis depends on aspartate 464, which acts as the Proton acceptor. Serine 468 carries the post-translational modification Phosphoserine. Threonine 504 bears the Phosphothreonine mark. Tyrosine 512 is subject to Phosphotyrosine.

It belongs to the protein kinase superfamily. Ser/Thr protein kinase family. CRK subfamily.

The protein resides in the membrane. The enzyme catalyses L-seryl-[protein] + ATP = O-phospho-L-seryl-[protein] + ADP + H(+). It catalyses the reaction L-threonyl-[protein] + ATP = O-phospho-L-threonyl-[protein] + ADP + H(+). This Arabidopsis thaliana (Mouse-ear cress) protein is Putative cysteine-rich receptor-like protein kinase 31 (CRK31).